Reading from the N-terminus, the 526-residue chain is Opine oxidase subunit A (526 aa).

4 residues coordinate [2Fe-2S] cluster: C396, C398, C431, and C436.

This sequence to T-protein and to dimethylglycine dehydrogenase. As to quaternary structure, heterodimer of a subunit A and a subunit B. The cofactor is [2Fe-2S] cluster.

The protein operates within opine metabolism; octopine degradation. Its function is as follows. Oxidative cleavage of octopine into L-arginine and pyruvate. The protein is Opine oxidase subunit A (ooxA) of Rhizobium meliloti (Ensifer meliloti).